Consider the following 485-residue polypeptide: Skb1 localization factor 1 (485 aa).

Residues 1 to 200 (MSSIIQNPIE…VDDSDLTPHT (200 aa)) are sufficient for interaction with Skb1. Disordered stretches follow at residues 117-230 (NAAN…MSRN), 286-416 (ETQH…LRRS), and 446-466 (TTQE…KPEK). Residues 171–182 (SRSSRYSKTSDL) show a composition bias toward polar residues. Positions 189-198 (RFVDDSDLTP) are enriched in basic and acidic residues. Composition is skewed to polar residues over residues 218–230 (GRSS…MSRN) and 341–363 (VGSS…QQDS). S222 carries the phosphoserine modification. Residues 371-393 (SERSYRRVRDQYLSKPRLSDKNR) show a composition bias toward basic and acidic residues. A compositionally biased stretch (polar residues) spans 394 to 416 (YSTFSEFPGQGTPSASQSNLRRS). Over residues 447–464 (TQERKPVVKPDSIKTVKP) the composition is skewed to basic and acidic residues. The tract at residues 451-485 (KPVVKPDSIKTVKPEKKKSKGFFKKLMHKISHIFD) is required and sufficient for plasma membrane anchoring; lysine-rich, may bind to anionic lipids in the plasma membrane. S458 is subject to Phosphoserine.

Interacts with Skb1.

It is found in the cell membrane. Acts as a membrane anchor for Skb1 in forming plasma membrane microdomains. Promotes mitotic entry by sequestering mitotic inhibitor Skb1 from its regulatory targets Cdr1 and Wee1. In Schizosaccharomyces pombe (strain 972 / ATCC 24843) (Fission yeast), this protein is Skb1 localization factor 1.